Consider the following 254-residue polypeptide: MTILPISAFSDNYIWTFIDKIAGVLDCVDPGESAPIIRFAQSNQLTLRTILLTHHHYDHIGGVDSLIKQWPSCKVYGPIDERISNLTHPIKQGQSVQVGSLHFHILFNPGHTSTHISYYEPQQGWLFCGDTLFSAGCGRVFDGTIEELHESLLLFKKLPRNTKIFCAHEYTLQNLKFAHTVEPCNSSVINYMQQILKQPSPCTLPSNIDLELSINPFLRTDKEQVKQYALSHGANSSDSLDVFEVLRNQKNSFK.

Residues histidine 54, histidine 56, aspartate 58, histidine 59, histidine 111, aspartate 130, and histidine 168 each contribute to the Zn(2+) site.

It belongs to the metallo-beta-lactamase superfamily. Glyoxalase II family. Monomer. Zn(2+) serves as cofactor.

The catalysed reaction is an S-(2-hydroxyacyl)glutathione + H2O = a 2-hydroxy carboxylate + glutathione + H(+). It participates in secondary metabolite metabolism; methylglyoxal degradation; (R)-lactate from methylglyoxal: step 2/2. In terms of biological role, thiolesterase that catalyzes the hydrolysis of S-D-lactoyl-glutathione to form glutathione and D-lactic acid. This Legionella pneumophila (strain Lens) protein is Hydroxyacylglutathione hydrolase.